A 204-amino-acid polypeptide reads, in one-letter code: Peptide deformylase (204 aa).

The Fe cation site is built by Cys-131 and His-174. Glu-175 is an active-site residue. Residue His-178 participates in Fe cation binding.

It belongs to the polypeptide deformylase family. Fe(2+) serves as cofactor.

The catalysed reaction is N-terminal N-formyl-L-methionyl-[peptide] + H2O = N-terminal L-methionyl-[peptide] + formate. Its function is as follows. Removes the formyl group from the N-terminal Met of newly synthesized proteins. Requires at least a dipeptide for an efficient rate of reaction. N-terminal L-methionine is a prerequisite for activity but the enzyme has broad specificity at other positions. This chain is Peptide deformylase, found in Streptococcus agalactiae serotype III (strain NEM316).